The following is a 180-amino-acid chain: Adenine phosphoribosyltransferase (180 aa).

This sequence belongs to the purine/pyrimidine phosphoribosyltransferase family. In terms of assembly, homodimer.

It is found in the cytoplasm. It catalyses the reaction AMP + diphosphate = 5-phospho-alpha-D-ribose 1-diphosphate + adenine. The protein operates within purine metabolism; AMP biosynthesis via salvage pathway; AMP from adenine: step 1/1. Functionally, catalyzes a salvage reaction resulting in the formation of AMP, that is energically less costly than de novo synthesis. The protein is Adenine phosphoribosyltransferase of Marinobacter nauticus (strain ATCC 700491 / DSM 11845 / VT8) (Marinobacter aquaeolei).